The chain runs to 207 residues: MATVLMINASDRLEQGVSVKMYNQFLNSYKEAHPNDTVEELNLFAEKLPYYGNTAITGQYKKAQGVELTGEEKEIVETIERYQEQFLNADKVVFAFPLWNFTVPAPLITYLSYLAQAGKTFRYTETGPVGLVGSKEVALLNARGGVYSNEEMAALEMAANLVRTTMAFWGITQPVEVIIEGHNAAPDQADAIISEGLENVKKAAVAF.

Ser-10 serves as a coordination point for FMN.

Belongs to the azoreductase type 1 family. Homodimer. FMN serves as cofactor.

The enzyme catalyses 2 a quinone + NADH + H(+) = 2 a 1,4-benzosemiquinone + NAD(+). It carries out the reaction N,N-dimethyl-1,4-phenylenediamine + anthranilate + 2 NAD(+) = 2-(4-dimethylaminophenyl)diazenylbenzoate + 2 NADH + 2 H(+). Its function is as follows. Quinone reductase that provides resistance to thiol-specific stress caused by electrophilic quinones. Functionally, also exhibits azoreductase activity. Catalyzes the reductive cleavage of the azo bond in aromatic azo compounds to the corresponding amines. The polypeptide is FMN-dependent NADH:quinone oxidoreductase (Shouchella clausii (strain KSM-K16) (Alkalihalobacillus clausii)).